Consider the following 116-residue polypeptide: Large ribosomal subunit protein bL19 (116 aa).

It belongs to the bacterial ribosomal protein bL19 family.

Functionally, this protein is located at the 30S-50S ribosomal subunit interface and may play a role in the structure and function of the aminoacyl-tRNA binding site. This chain is Large ribosomal subunit protein bL19, found in Staphylococcus epidermidis (strain ATCC 35984 / DSM 28319 / BCRC 17069 / CCUG 31568 / BM 3577 / RP62A).